Here is a 174-residue protein sequence, read N- to C-terminus: Protein TM_1551 (174 aa).

Residues 2-174 (IGEHPYVKWA…IYRFTVERYK (173 aa)) enclose the AMMECR1 domain.

This Thermotoga maritima (strain ATCC 43589 / DSM 3109 / JCM 10099 / NBRC 100826 / MSB8) protein is Protein TM_1551.